Reading from the N-terminus, the 122-residue chain is MARIAGVDLPRNKRIEIALTYIYGIGRSLSQEILTAAGVDMNTRCDNLTEAEVTKIREYIDKNVKVEGDLRRDISMSIKRLMDLGCYRGLRHRKGLPCRGQRTKTNARTRKGPARTVAGKKK.

A disordered region spans residues 97 to 122 (PCRGQRTKTNARTRKGPARTVAGKKK).

This sequence belongs to the universal ribosomal protein uS13 family. In terms of assembly, part of the 30S ribosomal subunit. Forms a loose heterodimer with protein S19. Forms two bridges to the 50S subunit in the 70S ribosome.

In terms of biological role, located at the top of the head of the 30S subunit, it contacts several helices of the 16S rRNA. In the 70S ribosome it contacts the 23S rRNA (bridge B1a) and protein L5 of the 50S subunit (bridge B1b), connecting the 2 subunits; these bridges are implicated in subunit movement. Contacts the tRNAs in the A and P-sites. This is Small ribosomal subunit protein uS13 from Geobacter sp. (strain M21).